Reading from the N-terminus, the 225-residue chain is tRNA (guanine-N(1)-)-methyltransferase (225 aa).

S-adenosyl-L-methionine is bound by residues G112 and 132 to 137; that span reads IGDYVL.

This sequence belongs to the RNA methyltransferase TrmD family. As to quaternary structure, homodimer.

Its subcellular location is the cytoplasm. It catalyses the reaction guanosine(37) in tRNA + S-adenosyl-L-methionine = N(1)-methylguanosine(37) in tRNA + S-adenosyl-L-homocysteine + H(+). Its function is as follows. Specifically methylates guanosine-37 in various tRNAs. This is tRNA (guanine-N(1)-)-methyltransferase from Flavobacterium psychrophilum (strain ATCC 49511 / DSM 21280 / CIP 103535 / JIP02/86).